The primary structure comprises 645 residues: Acetyl-coenzyme A synthetase (645 aa).

CoA contacts are provided by residues arginine 190–arginine 193 and threonine 308. Residues glycine 384–proline 386, aspartate 408–threonine 413, aspartate 497, and arginine 512 contribute to the ATP site. Position 520 (serine 520) interacts with CoA. Arginine 523 serves as a coordination point for ATP. Mg(2+) contacts are provided by valine 534, histidine 536, and valine 539. Position 606 is an N6-acetyllysine (lysine 606).

The protein belongs to the ATP-dependent AMP-binding enzyme family. Requires Mg(2+) as cofactor. Acetylated. Deacetylation by the SIR2-homolog deacetylase activates the enzyme.

The enzyme catalyses acetate + ATP + CoA = acetyl-CoA + AMP + diphosphate. Its function is as follows. Catalyzes the conversion of acetate into acetyl-CoA (AcCoA), an essential intermediate at the junction of anabolic and catabolic pathways. AcsA undergoes a two-step reaction. In the first half reaction, AcsA combines acetate with ATP to form acetyl-adenylate (AcAMP) intermediate. In the second half reaction, it can then transfer the acetyl group from AcAMP to the sulfhydryl group of CoA, forming the product AcCoA. The polypeptide is Acetyl-coenzyme A synthetase (Alkalilimnicola ehrlichii (strain ATCC BAA-1101 / DSM 17681 / MLHE-1)).